The following is a 430-amino-acid chain: Divergent protein kinase domain 2A (430 aa).

The signal sequence occupies residues 1–35; that stretch reads MWRLVPPKLGRLSRSLKLAALGSLLVLMVLHSPSL.

Belongs to the DIPK family.

It localises to the cytoplasmic vesicle. The protein localises to the COPI-coated vesicle. It is found in the golgi apparatus. Its subcellular location is the secreted. Its function is as follows. May play a role in cardiomyocyte proliferation through paracrine signaling and activation of the PPI3K-AKT-CDK7 signaling cascade. This Homo sapiens (Human) protein is Divergent protein kinase domain 2A.